The following is a 388-amino-acid chain: Protein DVU_0534 (388 aa).

The next 10 membrane-spanning stretches (helical) occupy residues 10–31 (LMTPGNIITGIILVMGLVLTVL), 57–78 (LLCGVALAAGGYVTSASCYLFG), 89–106 (AITTAFLGYFFVVVALNY), 130–144 (EVGLCVATYLTVLFV), 166–191 (LTLVLTIFGVVLSTLHQSSLGALFLI), 199–222 (LWYSSFLPVFFFISSMVAGLSMVI), 254–265 (AASFVLAGYFMI), 291–306 (MLGFVALPSFLYALGV), 316–328 (FASVLGVLGIVMN), and 354–368 (IGISVFIVTSIITVY).

This sequence belongs to the NrfD family.

Its subcellular location is the cell membrane. Functionally, HMWC (high-molecular-weight cytochrome c), ORF2, ORF3, ORF4, ORF5 and ORF6 in the HMC operon form a transmembrane protein complex that allows electron flow from the periplasmic hydrogenase to the cytoplasmic enzymes that catalyze reduction of sulfates. The sequence is that of Protein DVU_0534 from Nitratidesulfovibrio vulgaris (strain ATCC 29579 / DSM 644 / CCUG 34227 / NCIMB 8303 / VKM B-1760 / Hildenborough) (Desulfovibrio vulgaris).